We begin with the raw amino-acid sequence, 791 residues long: uncharacterized protein (791 aa).

Residues 10 to 30 (LLTITIGAVAVSSILLGGIFY) form a helical membrane-spanning segment. Residues 56 to 76 (NLDYQKARPSIKDNNLKEIPK) show a composition bias toward basic and acidic residues. Positions 56–175 (NLDYQKARPS…PQPQQIPNQS (120 aa)) are disordered. Residues 77–97 (PKPQPKPEPQPTPFPDPIPTP) show a composition bias toward pro residues. A compositionally biased stretch (basic and acidic residues) spans 98–124 (PKKEELKKPEIKPEEPKKPEIKPEPIP). Residues 125–139 (KPKPQPIPQPTPPVE) show a composition bias toward pro residues.

The protein to U.parvum UU044.

The protein localises to the membrane. This is an uncharacterized protein from Ureaplasma parvum serovar 3 (strain ATCC 700970).